The primary structure comprises 295 residues: Glycine N-phenylacetyltransferase (295 aa).

Lysine 43 bears the N6-acetyllysine mark. Lysine 48 is modified (N6-acetyllysine; alternate). Lysine 48 is modified (N6-succinyllysine; alternate). At lysine 80 the chain carries N6-acetyllysine. An N6-acetyllysine; alternate modification is found at lysine 182. The residue at position 182 (lysine 182) is an N6-succinyllysine; alternate.

The protein belongs to the glycine N-acyltransferase family.

The protein resides in the mitochondrion. The catalysed reaction is phenylacetyl-CoA + glycine = phenylacetylglycine + CoA + H(+). In terms of biological role, mitochondrial acyltransferase which transfers the acyl group to the N-terminus of glycine. Can conjugate a multitude of substrates to form a variety of N-acylglycines. Catalyzes the conjugation of arylacetic acids with glycine but does not have activity towards any alkyl-CoA. The chain is Glycine N-phenylacetyltransferase from Bos taurus (Bovine).